Here is a 41-residue protein sequence, read N- to C-terminus: Photosystem I reaction center subunit IX (41 aa).

Residues 7 to 27 traverse the membrane as a helical segment; it reads YLSTAPVIALAWMSFTAGLLI.

Belongs to the PsaJ family.

Its subcellular location is the plastid. The protein localises to the chloroplast thylakoid membrane. Functionally, may help in the organization of the PsaE and PsaF subunits. This chain is Photosystem I reaction center subunit IX, found in Tupiella akineta (Green alga).